Consider the following 518-residue polypeptide: Probable inorganic carbon transporter subunit DabB (518 aa).

The next 13 membrane-spanning stretches (helical) occupy residues 3-23 (MQWVGASMMLLIPVLFFLGSL), 37-57 (ISLLGLFLSMFLGIAVYFEWV), 65-85 (WVGVSKMSLVMLGLVCFIAFV), 114-134 (CVVTVIISNHMLVLMVAWIAI), 165-185 (AEACLLGAILILYYEHGTWFI), 207-227 (MLLALAALVKCAQLPLHGWLI), 242-262 (AGIINLGGYLLIIFAPLIVLS), 264-284 (MAQWILLIVGGITTVLAALVM), 302-322 (MGLMLVECALGLFELALLHLV), 358-378 (WWFAGIMSAAMVVGLIWLADL), 379-399 (SGPYSPWLLFAIAVTLLIAER), 403-423 (LTSSSVIGMVGLGVVLLVVYT), and 442-462 (WKGDLWIGFLLVMFMVGYFLL).

This sequence belongs to the inorganic carbon transporter (TC 9.A.2) DabB family. In terms of assembly, forms a complex with DabA.

It localises to the cell inner membrane. With respect to regulation, intracellular DIC accumulation is sensitive to CCCP (carbonyl cyanide-m-chlorophenylhydrazone) and DCCD (N,N-dicyclohexylcarbodiimide) and therefore likely driven by either proton gradient, ATP, or both. Its function is as follows. Part of an energy-coupled inorganic carbon pump involved in transport of dissolved inorganic carbon (DIC) with downstream gene dabA (Tcr_0854); has been suggested to be a proton-DIC symporter. The sequence is that of Probable inorganic carbon transporter subunit DabB from Hydrogenovibrio crunogenus (strain DSM 25203 / XCL-2) (Thiomicrospira crunogena).